Consider the following 183-residue polypeptide: Inosine/xanthosine triphosphatase (183 aa).

Aspartate 75 contributes to the Mg(2+) binding site. 75–76 (DG) serves as a coordination point for substrate.

It belongs to the YjjX NTPase family. Homodimer. The cofactor is Mg(2+). Requires Mn(2+) as cofactor.

It catalyses the reaction XTP + H2O = XDP + phosphate + H(+). The enzyme catalyses ITP + H2O = IDP + phosphate + H(+). In terms of biological role, phosphatase that hydrolyzes non-canonical purine nucleotides such as XTP and ITP to their respective diphosphate derivatives. Probably excludes non-canonical purines from DNA/RNA precursor pool, thus preventing their incorporation into DNA/RNA and avoiding chromosomal lesions. The chain is Inosine/xanthosine triphosphatase from Vibrio vulnificus (strain CMCP6).